The primary structure comprises 188 residues: dCTP deaminase (188 aa).

DCTP contacts are provided by residues 111-116 (KSTYAR), 135-137 (TLE), Q156, Y170, K179, and Q180. E137 functions as the Proton donor/acceptor in the catalytic mechanism.

The protein belongs to the dCTP deaminase family. As to quaternary structure, homotrimer.

It catalyses the reaction dCTP + H2O + H(+) = dUTP + NH4(+). It functions in the pathway pyrimidine metabolism; dUMP biosynthesis; dUMP from dCTP (dUTP route): step 1/2. Catalyzes the deamination of dCTP to dUTP. The protein is dCTP deaminase of Orientia tsutsugamushi (strain Boryong) (Rickettsia tsutsugamushi).